The chain runs to 256 residues: MSFPYFISPEQAMRERSELARKGIARGKSVVALVYAGGVLFVAENPSRSLQKISELYDRVGFAAAGKFNEFDNLRRGGIQFADTRGYAYDRRDVTGRQLANVYAQTLGTIFTEQAKPYEVELCVAEVAHYGETKPPELYRITYDGSIADEPHFVVMGGTTEPITTALKDSYAENANLREATRIAVRALRAGSESSNGDQSALDVGSLEVAILDVNRPRRAFRRINRPTLENLLRELDSNGSDGNGDAPELNGGSSD.

The interval 235 to 256 (ELDSNGSDGNGDAPELNGGSSD) is disordered.

The protein belongs to the peptidase T1A family. The 20S proteasome core is composed of 14 alpha and 14 beta subunits that assemble into four stacked heptameric rings, resulting in a barrel-shaped structure. The two inner rings, each composed of seven catalytic beta subunits, are sandwiched by two outer rings, each composed of seven alpha subunits. The catalytic chamber with the active sites is on the inside of the barrel. Has a gated structure, the ends of the cylinder being occluded by the N-termini of the alpha-subunits. Is capped by the proteasome-associated ATPase, ARC.

The protein localises to the cytoplasm. The protein operates within protein degradation; proteasomal Pup-dependent pathway. The formation of the proteasomal ATPase ARC-20S proteasome complex, likely via the docking of the C-termini of ARC into the intersubunit pockets in the alpha-rings, may trigger opening of the gate for substrate entry. Interconversion between the open-gate and close-gate conformations leads to a dynamic regulation of the 20S proteasome proteolysis activity. Functionally, component of the proteasome core, a large protease complex with broad specificity involved in protein degradation. This chain is Proteasome subunit alpha, found in Mycolicibacterium paratuberculosis (strain ATCC BAA-968 / K-10) (Mycobacterium paratuberculosis).